We begin with the raw amino-acid sequence, 525 residues long: GMP synthase [glutamine-hydrolyzing] (525 aa).

The region spanning 16-205 is the Glutamine amidotransferase type-1 domain; that stretch reads PVLVVDFGAQ…LHDFAGLGAD (190 aa). The Nucleophile role is filled by Cys-93. Catalysis depends on residues His-179 and Glu-181. The 194-residue stretch at 206–399 folds into the GMPS ATP-PPase domain; it reads WTAANIAGVL…LGLPEEIVAR (194 aa). 233–239 lines the ATP pocket; the sequence is SGGVDSA.

Homodimer.

It carries out the reaction XMP + L-glutamine + ATP + H2O = GMP + L-glutamate + AMP + diphosphate + 2 H(+). It participates in purine metabolism; GMP biosynthesis; GMP from XMP (L-Gln route): step 1/1. Functionally, catalyzes the synthesis of GMP from XMP. This chain is GMP synthase [glutamine-hydrolyzing], found in Mycolicibacterium paratuberculosis (strain ATCC BAA-968 / K-10) (Mycobacterium paratuberculosis).